A 304-amino-acid chain; its full sequence is Ribonuclease Z (304 aa).

Zn(2+) contacts are provided by His63, His65, Asp67, His68, His143, Asp213, and His271. Catalysis depends on Asp67, which acts as the Proton acceptor.

This sequence belongs to the RNase Z family. Homodimer. Requires Zn(2+) as cofactor.

The enzyme catalyses Endonucleolytic cleavage of RNA, removing extra 3' nucleotides from tRNA precursor, generating 3' termini of tRNAs. A 3'-hydroxy group is left at the tRNA terminus and a 5'-phosphoryl group is left at the trailer molecule.. Its function is as follows. Zinc phosphodiesterase, which displays some tRNA 3'-processing endonuclease activity. Probably involved in tRNA maturation, by removing a 3'-trailer from precursor tRNA. This Bacteroides fragilis (strain YCH46) protein is Ribonuclease Z.